Reading from the N-terminus, the 349-residue chain is Phosphate carrier protein, mitochondrial (349 aa).

Solcar repeat units lie at residues 47–131, 144–229, and 246–324; these read KYFA…FKVQ, YRTF…TVEL, and EQLV…VKVW. Helical transmembrane passes span 48–68, 108–128, 147–167, 207–227, 248–268, and 304–324; these read YFALCGLGGILSCGITHTAVV, APTFIGYSLQGLCKFGLYEVF, FVYLAASASAEFFADIALSPL, PLWGRQIPYTMMKFACFEKTV, LVVTFAAGYIAGVFCAIVSHP, and IIMIGTLTALQWFIYDAVKVW.

Belongs to the mitochondrial carrier (TC 2.A.29) family.

The protein resides in the mitochondrion inner membrane. In terms of biological role, transport of phosphate groups from the cytosol to the mitochondrial matrix. The sequence is that of Phosphate carrier protein, mitochondrial from Choristoneura fumiferana (Spruce budworm moth).